Here is a 334-residue protein sequence, read N- to C-terminus: Fructose-1,6-bisphosphatase class 1 (334 aa).

Glutamate 89, aspartate 112, leucine 114, and aspartate 115 together coordinate Mg(2+). Substrate-binding positions include 115 to 118 (DGSS), asparagine 208, tyrosine 241, and lysine 271. Position 277 (glutamate 277) interacts with Mg(2+).

It belongs to the FBPase class 1 family. As to quaternary structure, homotetramer. It depends on Mg(2+) as a cofactor.

The protein localises to the cytoplasm. The enzyme catalyses beta-D-fructose 1,6-bisphosphate + H2O = beta-D-fructose 6-phosphate + phosphate. Its pathway is carbohydrate biosynthesis; gluconeogenesis. The chain is Fructose-1,6-bisphosphatase class 1 from Photorhabdus laumondii subsp. laumondii (strain DSM 15139 / CIP 105565 / TT01) (Photorhabdus luminescens subsp. laumondii).